The following is a 480-amino-acid chain: NADH-quinone oxidoreductase subunit N (480 aa).

13 helical membrane passes run 10 to 30 (FISI…ILIE), 40 to 60 (WSSL…WGGI), 80 to 100 (FFTV…TAFF), 117 to 137 (AVFG…FLGI), 166 to 186 (LMGS…YGAI), 208 to 228 (VLFF…AALV), 246 to 266 (TAFM…RLFF), 276 to 296 (WNQV…FVAL), 304 to 324 (FFAY…VIGN), 330 to 350 (ALTF…AVLA), 374 to 394 (LASL…TAGF), 409 to 431 (YYGL…LRII), and 452 to 472 (IVGT…APFL).

This sequence belongs to the complex I subunit 2 family. In terms of assembly, NDH-1 is composed of 14 different subunits. Subunits NuoA, H, J, K, L, M, N constitute the membrane sector of the complex.

Its subcellular location is the cell inner membrane. The catalysed reaction is a quinone + NADH + 5 H(+)(in) = a quinol + NAD(+) + 4 H(+)(out). NDH-1 shuttles electrons from NADH, via FMN and iron-sulfur (Fe-S) centers, to quinones in the respiratory chain. The immediate electron acceptor for the enzyme in this species is believed to be ubiquinone. Couples the redox reaction to proton translocation (for every two electrons transferred, four hydrogen ions are translocated across the cytoplasmic membrane), and thus conserves the redox energy in a proton gradient. This is NADH-quinone oxidoreductase subunit N from Protochlamydia amoebophila (strain UWE25).